The chain runs to 448 residues: Probable glycine dehydrogenase (decarboxylating) subunit 1 (448 aa).

Belongs to the GcvP family. N-terminal subunit subfamily. In terms of assembly, the glycine cleavage system is composed of four proteins: P, T, L and H. In this organism, the P 'protein' is a heterodimer of two subunits.

It carries out the reaction N(6)-[(R)-lipoyl]-L-lysyl-[glycine-cleavage complex H protein] + glycine + H(+) = N(6)-[(R)-S(8)-aminomethyldihydrolipoyl]-L-lysyl-[glycine-cleavage complex H protein] + CO2. Functionally, the glycine cleavage system catalyzes the degradation of glycine. The P protein binds the alpha-amino group of glycine through its pyridoxal phosphate cofactor; CO(2) is released and the remaining methylamine moiety is then transferred to the lipoamide cofactor of the H protein. The sequence is that of Probable glycine dehydrogenase (decarboxylating) subunit 1 from Listeria monocytogenes serovar 1/2a (strain ATCC BAA-679 / EGD-e).